The chain runs to 365 residues: Probable dual-specificity RNA methyltransferase RlmN (365 aa).

The active-site Proton acceptor is Glu-111. The Radical SAM core domain occupies 117–351 (ADDRMTACIS…VNIRRSRGKD (235 aa)). Cys-124 and Cys-356 form a disulfide bridge. Residues Cys-131, Cys-135, and Cys-138 each contribute to the [4Fe-4S] cluster site. Residues 182-183 (GE), Ser-214, 237-239 (SLH), and Asn-313 each bind S-adenosyl-L-methionine. The active-site S-methylcysteine intermediate is the Cys-356.

It belongs to the radical SAM superfamily. RlmN family. [4Fe-4S] cluster serves as cofactor.

Its subcellular location is the cytoplasm. The enzyme catalyses adenosine(2503) in 23S rRNA + 2 reduced [2Fe-2S]-[ferredoxin] + 2 S-adenosyl-L-methionine = 2-methyladenosine(2503) in 23S rRNA + 5'-deoxyadenosine + L-methionine + 2 oxidized [2Fe-2S]-[ferredoxin] + S-adenosyl-L-homocysteine. It catalyses the reaction adenosine(37) in tRNA + 2 reduced [2Fe-2S]-[ferredoxin] + 2 S-adenosyl-L-methionine = 2-methyladenosine(37) in tRNA + 5'-deoxyadenosine + L-methionine + 2 oxidized [2Fe-2S]-[ferredoxin] + S-adenosyl-L-homocysteine. In terms of biological role, specifically methylates position 2 of adenine 2503 in 23S rRNA and position 2 of adenine 37 in tRNAs. The protein is Probable dual-specificity RNA methyltransferase RlmN of Cytophaga hutchinsonii (strain ATCC 33406 / DSM 1761 / CIP 103989 / NBRC 15051 / NCIMB 9469 / D465).